The following is a 237-amino-acid chain: Heme oxygenase (237 aa).

Histidine 17 serves as a coordination point for heme b.

The protein belongs to the heme oxygenase family.

The protein localises to the plastid. Its subcellular location is the chloroplast. The enzyme catalyses heme b + 3 reduced [NADPH--hemoprotein reductase] + 3 O2 = biliverdin IXalpha + CO + Fe(2+) + 3 oxidized [NADPH--hemoprotein reductase] + 3 H2O + H(+). Its function is as follows. Catalyzes the opening of the heme ring with the release of iron. Key enzyme in the synthesis of the chromophoric part of the photosynthetic antennae. In Guillardia theta (Cryptophyte), this protein is Heme oxygenase (pbsA).